Here is a 572-residue protein sequence, read N- to C-terminus: Urease subunit alpha (572 aa).

Positions 131 to 572 (GGIDAHIHFI…LPLAQRYFLF (442 aa)) constitute a Urease domain. Positions 136, 138, and 219 each coordinate Ni(2+). Lysine 219 is modified (N6-carboxylysine). Substrate is bound at residue histidine 221. Ni(2+) contacts are provided by histidine 248 and histidine 274. Histidine 322 (proton donor) is an active-site residue. Ni(2+) is bound at residue aspartate 362.

It belongs to the metallo-dependent hydrolases superfamily. Urease alpha subunit family. Heterotrimer of UreA (gamma), UreB (beta) and UreC (alpha) subunits. Three heterotrimers associate to form the active enzyme. Ni cation serves as cofactor. Post-translationally, carboxylation allows a single lysine to coordinate two nickel ions.

It localises to the cytoplasm. The enzyme catalyses urea + 2 H2O + H(+) = hydrogencarbonate + 2 NH4(+). It functions in the pathway nitrogen metabolism; urea degradation; CO(2) and NH(3) from urea (urease route): step 1/1. The sequence is that of Urease subunit alpha from Thermosynechococcus vestitus (strain NIES-2133 / IAM M-273 / BP-1).